The sequence spans 1145 residues: DNA-directed RNA polymerase subunit beta (1145 aa).

The span at 1101–1112 (LPEERRVSSSKE) shows a compositional bias: basic and acidic residues. The interval 1101–1145 (LPEERRVSSSKEEIEEEEEVEDNSDEFDETFLEEAEDDFSLDDED) is disordered. A compositionally biased stretch (acidic residues) spans 1113 to 1145 (EIEEEEEVEDNSDEFDETFLEEAEDDFSLDDED).

Belongs to the RNA polymerase beta chain family. In terms of assembly, the RNAP catalytic core consists of 2 alpha, 1 beta, 1 beta' and 1 omega subunit. When a sigma factor is associated with the core the holoenzyme is formed, which can initiate transcription.

The catalysed reaction is RNA(n) + a ribonucleoside 5'-triphosphate = RNA(n+1) + diphosphate. In terms of biological role, DNA-dependent RNA polymerase catalyzes the transcription of DNA into RNA using the four ribonucleoside triphosphates as substrates. In Desulforamulus reducens (strain ATCC BAA-1160 / DSM 100696 / MI-1) (Desulfotomaculum reducens), this protein is DNA-directed RNA polymerase subunit beta.